The primary structure comprises 358 residues: Peptide chain release factor 1 (358 aa).

At Gln-233 the chain carries N5-methylglutamine.

It belongs to the prokaryotic/mitochondrial release factor family. Methylated by PrmC. Methylation increases the termination efficiency of RF1.

The protein localises to the cytoplasm. Functionally, peptide chain release factor 1 directs the termination of translation in response to the peptide chain termination codons UAG and UAA. The protein is Peptide chain release factor 1 of Blochmanniella floridana.